Consider the following 969-residue polypeptide: Protein translocase subunit SecA (969 aa).

ATP-binding positions include Gln99, 117-121 (GEGKT), and Asp631.

It belongs to the SecA family. In terms of assembly, monomer and homodimer. Part of the essential Sec protein translocation apparatus which comprises SecA, SecYEG and auxiliary proteins SecDF. Other proteins may also be involved.

The protein resides in the cell inner membrane. The protein localises to the cytoplasm. The enzyme catalyses ATP + H2O + cellular proteinSide 1 = ADP + phosphate + cellular proteinSide 2.. Part of the Sec protein translocase complex. Interacts with the SecYEG preprotein conducting channel. Has a central role in coupling the hydrolysis of ATP to the transfer of proteins into and across the cell membrane, serving as an ATP-driven molecular motor driving the stepwise translocation of polypeptide chains across the membrane. This chain is Protein translocase subunit SecA, found in Chlamydia trachomatis serovar A (strain ATCC VR-571B / DSM 19440 / HAR-13).